We begin with the raw amino-acid sequence, 85 residues long: Small ribosomal subunit protein bS20 (85 aa).

The segment at 1–22 (MPQIKSAIKRVKTQNATNKRNA) is disordered. Residues 13–22 (TQNATNKRNA) are compositionally biased toward polar residues.

The protein belongs to the bacterial ribosomal protein bS20 family.

Binds directly to 16S ribosomal RNA. The sequence is that of Small ribosomal subunit protein bS20 from Lactobacillus acidophilus (strain ATCC 700396 / NCK56 / N2 / NCFM).